The sequence spans 427 residues: 3-phosphoshikimate 1-carboxyvinyltransferase (427 aa).

Residues Lys22, Ser23, and Arg27 each coordinate 3-phosphoshikimate. Position 22 (Lys22) interacts with phosphoenolpyruvate. Phosphoenolpyruvate contacts are provided by Gly96 and Arg124. Residues Ser169, Ser170, Gln171, Ser197, Asp313, Asn336, and Lys340 each contribute to the 3-phosphoshikimate site. Position 171 (Gln171) interacts with phosphoenolpyruvate. Asp313 functions as the Proton acceptor in the catalytic mechanism. Arg344, Arg386, and Lys411 together coordinate phosphoenolpyruvate.

It belongs to the EPSP synthase family. Monomer.

It is found in the cytoplasm. The catalysed reaction is 3-phosphoshikimate + phosphoenolpyruvate = 5-O-(1-carboxyvinyl)-3-phosphoshikimate + phosphate. It participates in metabolic intermediate biosynthesis; chorismate biosynthesis; chorismate from D-erythrose 4-phosphate and phosphoenolpyruvate: step 6/7. Catalyzes the transfer of the enolpyruvyl moiety of phosphoenolpyruvate (PEP) to the 5-hydroxyl of shikimate-3-phosphate (S3P) to produce enolpyruvyl shikimate-3-phosphate and inorganic phosphate. This Salmonella choleraesuis (strain SC-B67) protein is 3-phosphoshikimate 1-carboxyvinyltransferase.